A 272-amino-acid polypeptide reads, in one-letter code: MATYIVGDLHGCFDEFQLLLEQANFDPQYDELWLTGDLVARGENSLACLRYVKALGERATVVLGNHDVHLLSTLQGIKAVKPKDKVDAIFEAEDRLELQNWLRSRPLVAQHPVHQFLLVHAGVSPEWDLATTLACAREVEAVLQGEQFADFLAQMYGNSPDQWRADLQGIERWRYALNVFTRMRFCYADKRLDFDCKLPVEEAPEGLKPWFELDNPFYRQQPIIFGHWASLIGYQTPDTIYALDTGCVWGNHLTMLRWEDKHIFTQKRLNLD.

The protein belongs to the Ap4A hydrolase family.

The enzyme catalyses P(1),P(4)-bis(5'-adenosyl) tetraphosphate + H2O = 2 ADP + 2 H(+). Hydrolyzes diadenosine 5',5'''-P1,P4-tetraphosphate to yield ADP. This is Bis(5'-nucleosyl)-tetraphosphatase, symmetrical from Glaesserella parasuis serovar 5 (strain SH0165) (Haemophilus parasuis).